A 353-amino-acid chain; its full sequence is tRNA-specific 2-thiouridylase MnmA 2 (353 aa).

6–13 (LLSGGVDS) is a binding site for ATP. The interval 92-94 (NPD) is interaction with target base in tRNA. Cys97 serves as the catalytic Nucleophile. An intrachain disulfide couples Cys97 to Cys192. Gly120 contacts ATP. The segment at 142 to 144 (KDQ) is interaction with tRNA. Cys192 acts as the Cysteine persulfide intermediate in catalysis.

Belongs to the MnmA/TRMU family.

It localises to the cytoplasm. It catalyses the reaction S-sulfanyl-L-cysteinyl-[protein] + uridine(34) in tRNA + AH2 + ATP = 2-thiouridine(34) in tRNA + L-cysteinyl-[protein] + A + AMP + diphosphate + H(+). Its function is as follows. Catalyzes the 2-thiolation of uridine at the wobble position (U34) of tRNA, leading to the formation of s(2)U34. This is tRNA-specific 2-thiouridylase MnmA 2 from Bacteroides fragilis (strain ATCC 25285 / DSM 2151 / CCUG 4856 / JCM 11019 / LMG 10263 / NCTC 9343 / Onslow / VPI 2553 / EN-2).